We begin with the raw amino-acid sequence, 358 residues long: Phospho-N-acetylmuramoyl-pentapeptide-transferase (358 aa).

10 helical membrane-spanning segments follow: residues 28-48, 70-90, 92-112, 133-153, 165-185, 196-216, 233-253, 260-280, 285-305, and 335-355; these read AALM…ITWL, TPTM…LLWA, LTNI…AVGF, MGGQ…NPDY, VTFD…VAAS, GLAI…IYIT, VGEV…FLWF, VFMG…LALL, LVLA…IVQV, and KIII…LSVL.

This sequence belongs to the glycosyltransferase 4 family. MraY subfamily. The cofactor is Mg(2+).

The protein resides in the cell inner membrane. It carries out the reaction UDP-N-acetyl-alpha-D-muramoyl-L-alanyl-gamma-D-glutamyl-meso-2,6-diaminopimeloyl-D-alanyl-D-alanine + di-trans,octa-cis-undecaprenyl phosphate = di-trans,octa-cis-undecaprenyl diphospho-N-acetyl-alpha-D-muramoyl-L-alanyl-D-glutamyl-meso-2,6-diaminopimeloyl-D-alanyl-D-alanine + UMP. It participates in cell wall biogenesis; peptidoglycan biosynthesis. Functionally, catalyzes the initial step of the lipid cycle reactions in the biosynthesis of the cell wall peptidoglycan: transfers peptidoglycan precursor phospho-MurNAc-pentapeptide from UDP-MurNAc-pentapeptide onto the lipid carrier undecaprenyl phosphate, yielding undecaprenyl-pyrophosphoryl-MurNAc-pentapeptide, known as lipid I. This Desulfovibrio desulfuricans (strain ATCC 27774 / DSM 6949 / MB) protein is Phospho-N-acetylmuramoyl-pentapeptide-transferase.